A 281-amino-acid polypeptide reads, in one-letter code: Aminoglycoside N(3)-acetyltransferase IX (281 aa).

Belongs to the antibiotic N-acetyltransferase family.

It carries out the reaction a 2-deoxystreptamine antibiotic + acetyl-CoA = an N(3)-acetyl-2-deoxystreptamine antibiotic + CoA + H(+). In terms of biological role, resistance to neomycin. The polypeptide is Aminoglycoside N(3)-acetyltransferase IX (aacC9) (Micromonospora chalcea).